A 296-amino-acid chain; its full sequence is UDP-N-acetylenolpyruvoylglucosamine reductase (296 aa).

In terms of domain architecture, FAD-binding PCMH-type spans 26–191; that stretch reads RIGGPANYFK…LSATFRLSKS (166 aa). The active site involves Arg170. Cys218 (proton donor) is an active-site residue. Glu287 is a catalytic residue.

The protein belongs to the MurB family. Requires FAD as cofactor.

The protein localises to the cytoplasm. The catalysed reaction is UDP-N-acetyl-alpha-D-muramate + NADP(+) = UDP-N-acetyl-3-O-(1-carboxyvinyl)-alpha-D-glucosamine + NADPH + H(+). It participates in cell wall biogenesis; peptidoglycan biosynthesis. In terms of biological role, cell wall formation. The chain is UDP-N-acetylenolpyruvoylglucosamine reductase from Chlamydia felis (strain Fe/C-56) (Chlamydophila felis).